The primary structure comprises 199 residues: Large ribosomal subunit protein bL25 (199 aa).

The protein belongs to the bacterial ribosomal protein bL25 family. CTC subfamily. Part of the 50S ribosomal subunit; part of the 5S rRNA/L5/L18/L25 subcomplex. Contacts the 5S rRNA. Binds to the 5S rRNA independently of L5 and L18.

Its function is as follows. This is one of the proteins that binds to the 5S RNA in the ribosome where it forms part of the central protuberance. This chain is Large ribosomal subunit protein bL25, found in Nostoc punctiforme (strain ATCC 29133 / PCC 73102).